A 275-amino-acid chain; its full sequence is 3-methyl-2-oxobutanoate hydroxymethyltransferase (275 aa).

Mg(2+)-binding residues include D55 and D94. Residues 55–56 (DS), D94, and K122 each bind 3-methyl-2-oxobutanoate. E124 serves as a coordination point for Mg(2+). The active-site Proton acceptor is E191.

Belongs to the PanB family. Homodecamer; pentamer of dimers. Requires Mg(2+) as cofactor.

It is found in the cytoplasm. The catalysed reaction is 3-methyl-2-oxobutanoate + (6R)-5,10-methylene-5,6,7,8-tetrahydrofolate + H2O = 2-dehydropantoate + (6S)-5,6,7,8-tetrahydrofolate. Its pathway is cofactor biosynthesis; (R)-pantothenate biosynthesis; (R)-pantoate from 3-methyl-2-oxobutanoate: step 1/2. In terms of biological role, catalyzes the reversible reaction in which hydroxymethyl group from 5,10-methylenetetrahydrofolate is transferred onto alpha-ketoisovalerate to form ketopantoate. The protein is 3-methyl-2-oxobutanoate hydroxymethyltransferase of Marinomonas sp. (strain MWYL1).